The following is a 352-amino-acid chain: UDP-3-O-acylglucosamine N-acyltransferase (352 aa).

Histidine 244 functions as the Proton acceptor in the catalytic mechanism.

It belongs to the transferase hexapeptide repeat family. LpxD subfamily. In terms of assembly, homotrimer.

It carries out the reaction a UDP-3-O-[(3R)-3-hydroxyacyl]-alpha-D-glucosamine + a (3R)-hydroxyacyl-[ACP] = a UDP-2-N,3-O-bis[(3R)-3-hydroxyacyl]-alpha-D-glucosamine + holo-[ACP] + H(+). It participates in bacterial outer membrane biogenesis; LPS lipid A biosynthesis. In terms of biological role, catalyzes the N-acylation of UDP-3-O-acylglucosamine using 3-hydroxyacyl-ACP as the acyl donor. Is involved in the biosynthesis of lipid A, a phosphorylated glycolipid that anchors the lipopolysaccharide to the outer membrane of the cell. This Anaeromyxobacter sp. (strain Fw109-5) protein is UDP-3-O-acylglucosamine N-acyltransferase.